A 199-amino-acid chain; its full sequence is 5'-deoxynucleotidase KPK_1466 (199 aa).

Substrate is bound by residues 18-19 and histidine 33; that span reads RW. Positions 30–142 constitute an HD domain; sequence VSEHSLQVAM…VKQADALCAY (113 aa). 3 residues coordinate a divalent metal cation: histidine 33, histidine 68, and aspartate 69. Substrate is bound by residues aspartate 69, 77-80, and aspartate 137; that span reads DLPT. Aspartate 137 contributes to the a divalent metal cation binding site.

Belongs to the 5DNU family. Homodimer. A divalent metal cation serves as cofactor.

The protein localises to the cytoplasm. The enzyme catalyses a 2'-deoxyribonucleoside 5'-phosphate + H2O = a 2'-deoxyribonucleoside + phosphate. Functionally, catalyzes the strictly specific dephosphorylation of 2'-deoxyribonucleoside 5'-monophosphates. The sequence is that of 5'-deoxynucleotidase KPK_1466 from Klebsiella pneumoniae (strain 342).